Here is a 285-residue protein sequence, read N- to C-terminus: Polyamine aminopropyltransferase (285 aa).

The region spanning 5–241 is the PABS domain; that stretch reads QDWFTESYPD…GWWSATMAGK (237 aa). S-methyl-5'-thioadenosine is bound at residue glutamine 35. Spermidine contacts are provided by histidine 66 and aspartate 90. Residues aspartate 110 and 141–142 each bind S-methyl-5'-thioadenosine; that span reads DG. The active-site Proton acceptor is the aspartate 160. 160–163 provides a ligand contact to spermidine; sequence DSTD. Residue proline 167 coordinates S-methyl-5'-thioadenosine.

This sequence belongs to the spermidine/spermine synthase family. As to quaternary structure, homodimer or homotetramer.

The protein resides in the cytoplasm. It carries out the reaction S-adenosyl 3-(methylsulfanyl)propylamine + putrescine = S-methyl-5'-thioadenosine + spermidine + H(+). The protein operates within amine and polyamine biosynthesis; spermidine biosynthesis; spermidine from putrescine: step 1/1. Its function is as follows. Catalyzes the irreversible transfer of a propylamine group from the amino donor S-adenosylmethioninamine (decarboxy-AdoMet) to putrescine (1,4-diaminobutane) to yield spermidine. This Methylococcus capsulatus (strain ATCC 33009 / NCIMB 11132 / Bath) protein is Polyamine aminopropyltransferase.